The sequence spans 256 residues: MNNIWWQTKGQGNVHLVLLHGWGLNAEVWRCIDEELSSHFTLHLVDLPGFGRSQGFGALSLADMAEAVLQQAPDKAIWLGWSLGGLVASQIALTHPERVQALVTVASSPCFSARDDWPGIKPDVLAGFQQQLSDDFQRTVERFLALQTMGTETARQDARALKKTVLALPMPEVDVLNGGLEILKTVDLRQPLQNVPMPFLRLYGYLDGLVPRKVVPMLDKLWPRSKSYIFAKAAHAPFISHPVEFCHLLVALKQRV.

An AB hydrolase-1 domain is found at 15 to 242 (HLVLLHGWGL…AAHAPFISHP (228 aa)). Substrate-binding positions include Trp-22, 82 to 83 (SL), and 143 to 147 (FLALQ). Catalysis depends on Ser-82, which acts as the Nucleophile. Catalysis depends on residues Asp-207 and His-235. Substrate is bound at residue His-235.

It belongs to the AB hydrolase superfamily. Carboxylesterase BioH family. In terms of assembly, monomer.

Its subcellular location is the cytoplasm. It catalyses the reaction 6-carboxyhexanoyl-[ACP] methyl ester + H2O = 6-carboxyhexanoyl-[ACP] + methanol + H(+). Its pathway is cofactor biosynthesis; biotin biosynthesis. Its function is as follows. The physiological role of BioH is to remove the methyl group introduced by BioC when the pimeloyl moiety is complete. It allows to synthesize pimeloyl-ACP via the fatty acid synthetic pathway through the hydrolysis of the ester bonds of pimeloyl-ACP esters. This is Pimeloyl-[acyl-carrier protein] methyl ester esterase from Shigella boydii serotype 18 (strain CDC 3083-94 / BS512).